The primary structure comprises 367 residues: Mitochondrial GTPase 1 (367 aa).

The CP-type G domain occupies Leu-42 to Pro-228. GTP-binding positions include Thr-89–Asp-92, Asn-160–Thr-165, and Gly-224.

Belongs to the TRAFAC class YlqF/YawG GTPase family. MTG1 subfamily.

Its subcellular location is the mitochondrion inner membrane. Functionally, mitochondrial GTPase involved in assembly of the large ribosomal subunit. Plays a role in expression of the mitochondrial translational machinery. The chain is Mitochondrial GTPase 1 (MTG1) from Saccharomyces cerevisiae (strain ATCC 204508 / S288c) (Baker's yeast).